The sequence spans 216 residues: Large ribosomal subunit protein uL4 (216 aa).

Residues 47-77 are disordered; that stretch reads THKVKGMGEVSGTTKKPYRQKGTGNARQGSL.

The protein belongs to the universal ribosomal protein uL4 family. As to quaternary structure, part of the 50S ribosomal subunit.

Its function is as follows. One of the primary rRNA binding proteins, this protein initially binds near the 5'-end of the 23S rRNA. It is important during the early stages of 50S assembly. It makes multiple contacts with different domains of the 23S rRNA in the assembled 50S subunit and ribosome. Forms part of the polypeptide exit tunnel. This is Large ribosomal subunit protein uL4 from Acidiphilium cryptum (strain JF-5).